A 143-amino-acid chain; its full sequence is Small ribosomal subunit protein uS11c (143 aa).

It belongs to the universal ribosomal protein uS11 family. As to quaternary structure, part of the 30S ribosomal subunit.

The protein resides in the plastid. The protein localises to the chloroplast. The polypeptide is Small ribosomal subunit protein uS11c (Oryza nivara (Indian wild rice)).